The following is a 141-amino-acid chain: Hemoglobin subunit alpha (141 aa).

The Globin domain maps to 1 to 141 (VLSSDDKCNV…VSSVLTSKYR (141 aa)). His58 contacts O2. His87 is a binding site for heme b.

This sequence belongs to the globin family. As to quaternary structure, heterotetramer of two alpha chains and two beta chains. In terms of tissue distribution, red blood cells.

Functionally, involved in oxygen transport from the lung to the various peripheral tissues. The chain is Hemoglobin subunit alpha (HBA) from Crocodylus niloticus (Nile crocodile).